We begin with the raw amino-acid sequence, 597 residues long: Elongation factor 4 (597 aa).

One can recognise a tr-type G domain in the interval 2–184 (KHIRNFSIIA…NIVSAIPAPE (183 aa)). GTP-binding positions include 14 to 19 (DHGKST) and 131 to 134 (NKID).

The protein belongs to the TRAFAC class translation factor GTPase superfamily. Classic translation factor GTPase family. LepA subfamily.

It is found in the cell inner membrane. It catalyses the reaction GTP + H2O = GDP + phosphate + H(+). Required for accurate and efficient protein synthesis under certain stress conditions. May act as a fidelity factor of the translation reaction, by catalyzing a one-codon backward translocation of tRNAs on improperly translocated ribosomes. Back-translocation proceeds from a post-translocation (POST) complex to a pre-translocation (PRE) complex, thus giving elongation factor G a second chance to translocate the tRNAs correctly. Binds to ribosomes in a GTP-dependent manner. This chain is Elongation factor 4, found in Vibrio parahaemolyticus serotype O3:K6 (strain RIMD 2210633).